Consider the following 81-residue polypeptide: Arminin 2a (81 aa).

A signal peptide spans 1 to 18 (MKTVFAILFLAFIALTYA). The propeptide occupies 19–57 (RSYEDVKEEIKNEVVKEILEDLEEESDELDDKSKEINDA). Alanine amide is present on A78.

The protein belongs to the arminin family. As to expression, expressed in entodermal epithelium along the body column.

The protein localises to the secreted. It is found in the target cell membrane. Antimicrobial peptide with a broad-spectrum antimicrobial activity. Keeps its antibacterial activity under a wide range of salt concentrations that mimic physiological conditions of human blood, which is surprising, since Hydra is an obligate freshwater animal with nearly no salt tolerance. Does not affect red blood cells. This chain is Arminin 2a, found in Hydra vulgaris (Hydra).